The chain runs to 133 residues: Small ribosomal subunit protein uS9 (133 aa).

Positions 94–133 (SADNRKPLKTEGHLSRDPRAKERRKYGLKKARKAPQFSKR) are disordered. The span at 95–113 (ADNRKPLKTEGHLSRDPRA) shows a compositional bias: basic and acidic residues. Over residues 114-133 (KERRKYGLKKARKAPQFSKR) the composition is skewed to basic residues.

Belongs to the universal ribosomal protein uS9 family.

This Synechococcus sp. (strain CC9605) protein is Small ribosomal subunit protein uS9.